Here is a 422-residue protein sequence, read N- to C-terminus: 3-phosphoshikimate 1-carboxyvinyltransferase (422 aa).

3 residues coordinate 3-phosphoshikimate: Lys20, Ser21, and Arg25. Lys20 contributes to the phosphoenolpyruvate binding site. Residues Gly91 and Arg119 each contribute to the phosphoenolpyruvate site. Residues Thr163, Ser164, Gln165, Asp305, Gln328, and Lys332 each coordinate 3-phosphoshikimate. Residue Gln165 participates in phosphoenolpyruvate binding. The active-site Proton acceptor is the Asp305. Residues Arg336 and Arg377 each contribute to the phosphoenolpyruvate site.

It belongs to the EPSP synthase family. Monomer.

Its subcellular location is the cytoplasm. The enzyme catalyses 3-phosphoshikimate + phosphoenolpyruvate = 5-O-(1-carboxyvinyl)-3-phosphoshikimate + phosphate. Its pathway is metabolic intermediate biosynthesis; chorismate biosynthesis; chorismate from D-erythrose 4-phosphate and phosphoenolpyruvate: step 6/7. Catalyzes the transfer of the enolpyruvyl moiety of phosphoenolpyruvate (PEP) to the 5-hydroxyl of shikimate-3-phosphate (S3P) to produce enolpyruvyl shikimate-3-phosphate and inorganic phosphate. This chain is 3-phosphoshikimate 1-carboxyvinyltransferase, found in Ruminiclostridium cellulolyticum (strain ATCC 35319 / DSM 5812 / JCM 6584 / H10) (Clostridium cellulolyticum).